A 757-amino-acid chain; its full sequence is Dynamin-related protein DNM1 (757 aa).

One can recognise a Dynamin-type G domain in the interval 25 to 333 (TLDLPILAVV…LLSHIRDKLP (309 aa)). A G1 motif region spans residues 35–42 (GSQSSGKS). 35-42 (GSQSSGKS) is a GTP binding site. A G2 motif region spans residues 61–63 (VTR). Residues 175–178 (DLPG) form a G3 motif region. Residues 175–179 (DLPGI) and 244–247 (TKLD) contribute to the GTP site. The tract at residues 244 to 247 (TKLD) is G4 motif. The tract at residues 274 to 277 (VNRS) is G5 motif. Residues 557 to 597 (SKLSQQENGQTNGINGTSSISSNIDQDSAKNSDYDDDGIDA) form a disordered region. A compositionally biased stretch (low complexity) spans 567 to 580 (TNGINGTSSISSNI). S629 bears the Phosphoserine mark. The GED domain occupies 670–757 (CELIKRLIVS…KAATLISNIL (88 aa)).

Belongs to the TRAFAC class dynamin-like GTPase superfamily. Dynamin/Fzo/YdjA family. In terms of assembly, interacts with FIS1 and MDV1.

It localises to the mitochondrion outer membrane. It catalyses the reaction GTP + H2O = GDP + phosphate + H(+). Microtubule-associated force-producing protein that participates mitochondrial fission. Fission of mitochondria occurs in many cell types and constitutes an important step in mitochondria morphology, which is balanced between fusion and fission. Functions antagonistically with FZO1. This is Dynamin-related protein DNM1 (DNM1) from Saccharomyces cerevisiae (strain ATCC 204508 / S288c) (Baker's yeast).